Consider the following 386-residue polypeptide: MKIHEYQGKDILRQFGVPVPRGIPAFTVQEAVEAAQKLGGPVWVVKAQIHAGGRGKGGGVKVAKSIDDVKALAGQILGMQLVTHQTGPEGQKVRRLYIEDGADIQKEYYLSCVTDRGTQKVAFIASSEGGMDIEEVAHSTPEKIITIFVDPLVGLTQAQGEELAKGIGMPADSTAQFIDICQKLYKCYMDTDASLVEINPLNRDSKGNVVALDAKFNFDANALFRLPEIVALRDLDEEDPAEVEASKFDLAYISLDGNIGCLVNGAGLAMATMDTIKLFGGEPANFLDVGGGATPEKVTEAFKIMLKNPKVEGILVNIFGGIMKCDTIATGVITACKAVNLQVPLVVRMKGTNEELGKKMLAESGLPIISADTMAEAATKIVEAVK.

Residues 9–244 (KDILRQFGVP…LDEEDPAEVE (236 aa)) form the ATP-grasp domain. ATP is bound by residues Lys46, 53-55 (GRG), Glu99, Ala102, and Glu107. Asn199 and Asp213 together coordinate Mg(2+). Substrate-binding positions include Asn264 and 321–323 (GIM).

The protein belongs to the succinate/malate CoA ligase beta subunit family. Heterotetramer of two alpha and two beta subunits. The cofactor is Mg(2+).

It carries out the reaction succinate + ATP + CoA = succinyl-CoA + ADP + phosphate. The catalysed reaction is GTP + succinate + CoA = succinyl-CoA + GDP + phosphate. It participates in carbohydrate metabolism; tricarboxylic acid cycle; succinate from succinyl-CoA (ligase route): step 1/1. In terms of biological role, succinyl-CoA synthetase functions in the citric acid cycle (TCA), coupling the hydrolysis of succinyl-CoA to the synthesis of either ATP or GTP and thus represents the only step of substrate-level phosphorylation in the TCA. The beta subunit provides nucleotide specificity of the enzyme and binds the substrate succinate, while the binding sites for coenzyme A and phosphate are found in the alpha subunit. The polypeptide is Succinate--CoA ligase [ADP-forming] subunit beta (Delftia acidovorans (strain DSM 14801 / SPH-1)).